Reading from the N-terminus, the 164-residue chain is uncharacterized protein (164 aa).

The signal sequence occupies residues 1–25; that stretch reads MMKTVKHLLCCAIAASALISTGVHA.

This is an uncharacterized protein from Escherichia coli (strain K12).